The chain runs to 456 residues: Alcohol acyltransferase 1 (456 aa).

Residues His-166 and Asp-382 each act as proton acceptor in the active site.

It belongs to the plant acyltransferase family.

In terms of biological role, involved in the biosynthesis of volatile esters which confer kiwifruit flavor. Alcohol acyl transferase that can use a wide range of alcohols as substrate to produce esters. The sequence is that of Alcohol acyltransferase 1 from Actinidia chinensis var. chinensis (Chinese soft-hair kiwi).